We begin with the raw amino-acid sequence, 271 residues long: Chymotrypsin-like elastase family member 2A (271 aa).

The signal sequence occupies residues 1–16 (MIRTLLLSALVAGALS). The propeptide at 17-30 (CGYPTYEVEDDVSR) is activation peptide. The region spanning 31–269 (VVGGQEATPN…YIDWINSVMA (239 aa)) is the Peptidase S1 domain. A disulfide bridge links Cys60 with Cys76. Active-site charge relay system residues include His75 and Asp123. 3 disulfide bridges follow: Cys157/Cys224, Cys188/Cys204, and Cys214/Cys245. Catalysis depends on Ser218, which acts as the Charge relay system.

It belongs to the peptidase S1 family. Elastase subfamily. As to quaternary structure, interacts with CPA1. Interacts with SERPINA1. Highly expressed in pancreas (at mRNA and protein levels). Also expressed in adrenal gland and small intestine.

It is found in the secreted. The catalysed reaction is Preferential cleavage: Leu-|-Xaa, Met-|-Xaa and Phe-|-Xaa. Hydrolyzes elastin.. In terms of biological role, elastase that enhances insulin signaling and might have a physiologic role in cellular glucose metabolism. Circulates in plasma and reduces platelet hyperactivation, triggers both insulin secretion and degradation, and increases insulin sensitivity. This is Chymotrypsin-like elastase family member 2A from Mus musculus (Mouse).